Reading from the N-terminus, the 615-residue chain is Angiotensin-converting enzyme (615 aa).

The N-terminal stretch at 1-17 is a signal peptide; that stretch reads MRLFLLALLATLAVTQA. One can recognise a Peptidase M2 domain in the interval 19-607; that stretch reads VKEEIQAKEY…IKNNVHIGWT (589 aa). An N-linked (GlcNAc...) asparagine glycan is attached at N53. The cysteines at positions 133 and 141 are disulfide-linked. N-linked (GlcNAc...) asparagine glycans are attached at residues N196 and N311. Cysteines 336 and 354 form a disulfide. Residue H367 participates in Zn(2+) binding. E368 serves as the catalytic Proton acceptor. H371 and E395 together coordinate Zn(2+). H497 (proton donor) is an active-site residue. A disulfide bridge connects residues C522 and C540.

Belongs to the peptidase M2 family. Requires Zn(2+) as cofactor. In terms of processing, glycosylated. Expressed in vesicular structures in spermatocytes and early spermatids (at protein level).

Its subcellular location is the secreted. The protein resides in the extracellular space. The enzyme catalyses Release of a C-terminal dipeptide, oligopeptide-|-Xaa-Yaa, when Xaa is not Pro, and Yaa is neither Asp nor Glu. Thus, conversion of angiotensin I to angiotensin II, with increase in vasoconstrictor activity, but no action on angiotensin II.. Inhibited by captopril and, to a lesser extent, by lisinopril, trandolaprilat, fosinoprilat and enalaprilat. Functionally, may be involved in the specific maturation or degradation of a number of bioactive peptides. May play a role in the contractions of the heart, gut and testes, and in spermatid differentiation. The protein is Angiotensin-converting enzyme (Ance) of Drosophila melanogaster (Fruit fly).